Here is a 175-residue protein sequence, read N- to C-terminus: Large ribosomal subunit protein uL10 (175 aa).

This sequence belongs to the universal ribosomal protein uL10 family. In terms of assembly, part of the ribosomal stalk of the 50S ribosomal subunit. The N-terminus interacts with L11 and the large rRNA to form the base of the stalk. The C-terminus forms an elongated spine to which L12 dimers bind in a sequential fashion forming a multimeric L10(L12)X complex.

Functionally, forms part of the ribosomal stalk, playing a central role in the interaction of the ribosome with GTP-bound translation factors. The chain is Large ribosomal subunit protein uL10 from Desulfotalea psychrophila (strain LSv54 / DSM 12343).